Here is a 371-residue protein sequence, read N- to C-terminus: Phospho-N-acetylmuramoyl-pentapeptide-transferase (371 aa).

A run of 11 helical transmembrane segments spans residues 21–41 (NHILVLFGLISITCVFSDFYY), 46–66 (LTIPFIITTLVSSIITFIGIP), 92–112 (PTMGGIFFIPIGIIVSNILYF), 119–139 (IILTLSFVIIFFMFIGFIDDF), 156–176 (ILLQSLISLIFILICASNNLI), 182–202 (IANKVFNIGNLIYPLGIFVLL), 216–236 (GLLSGCSVLIFTGLAISILIE), 241–261 (NSTLAPLCIAMAGACMGFLFL), 268–288 (LFMGDSGSLAIGASLGGIALI), 296–316 (LIMGGILAAESISVIIQVSIF), and 349–369 (IVSSFWLITLFLVIINLIFLI).

It belongs to the glycosyltransferase 4 family. MraY subfamily. Mg(2+) is required as a cofactor.

The protein resides in the cell inner membrane. The enzyme catalyses UDP-N-acetyl-alpha-D-muramoyl-L-alanyl-gamma-D-glutamyl-meso-2,6-diaminopimeloyl-D-alanyl-D-alanine + di-trans,octa-cis-undecaprenyl phosphate = di-trans,octa-cis-undecaprenyl diphospho-N-acetyl-alpha-D-muramoyl-L-alanyl-D-glutamyl-meso-2,6-diaminopimeloyl-D-alanyl-D-alanine + UMP. The protein operates within cell wall biogenesis; peptidoglycan biosynthesis. Catalyzes the initial step of the lipid cycle reactions in the biosynthesis of the cell wall peptidoglycan: transfers peptidoglycan precursor phospho-MurNAc-pentapeptide from UDP-MurNAc-pentapeptide onto the lipid carrier undecaprenyl phosphate, yielding undecaprenyl-pyrophosphoryl-MurNAc-pentapeptide, known as lipid I. This is Phospho-N-acetylmuramoyl-pentapeptide-transferase from Prochlorococcus marinus (strain NATL2A).